Consider the following 686-residue polypeptide: Rhophilin-2 (686 aa).

Residues 26 to 100 (NPLAQTGRSK…LEGLNISVGV (75 aa)) form the REM-1 domain. An interaction with Rho region spans residues 46 to 66 (QILKAVRMRTGAENLLKVATN). In terms of domain architecture, BRO1 spans 111 to 502 (PLIPLGLKET…TDFFQKLGPL (392 aa)). Residues 515–593 (RGIHFTVEEG…EEVEMKVVSL (79 aa)) enclose the PDZ domain. A Phosphothreonine modification is found at T655.

Belongs to the RHPN family. Interacts with GTP-bound RhoA and RhoB. Interacts with both GTP- and GDP-bound RhoA. Interacts with KRT18.

It localises to the cytoplasm. The protein localises to the perinuclear region. In terms of biological role, binds specifically to GTP-Rho. May function in a Rho pathway to limit stress fiber formation and/or increase the turnover of F-actin structures in the absence of high levels of RhoA activity. The polypeptide is Rhophilin-2 (Rhpn2) (Mus musculus (Mouse)).